Consider the following 324-residue polypeptide: 1-deoxyxylulose-5-phosphate synthase YajO (324 aa).

Catalysis depends on Y61, which acts as the Proton donor.

Belongs to the aldo/keto reductase family. Aldo/keto reductase 2 subfamily.

It carries out the reaction D-ribulose 5-phosphate + AH2 = 1-deoxy-D-xylulose 5-phosphate + A + H2O. With respect to regulation, NADH, NADPH or ATP do not increase activity. Catalyzes the conversion of ribulose 5-phosphate (Ru5P) to 1-deoxy-D-xylulose 5-phosphate (DXP), providing a direct route from pentoses to terpenes. May play a role in biosynthesis of DXP under conditions of thiamine starvation. The polypeptide is 1-deoxyxylulose-5-phosphate synthase YajO (yajO) (Escherichia coli (strain K12)).